The following is a 475-amino-acid chain: Lipid II flippase MurJ (475 aa).

Topologically, residues methionine 1–serine 2 are cytoplasmic. A helical transmembrane segment spans residues isoleucine 3–phenylalanine 23. The Periplasmic portion of the chain corresponds to arginine 24 to serine 35. A helical membrane pass occupies residues tyrosine 36–glycine 56. Residues glutamate 57 to lysine 78 lie on the Cytoplasmic side of the membrane. Residues phenylalanine 79–tyrosine 99 traverse the membrane as a helical segment. At phenylalanine 100–lysine 123 the chain is on the periplasmic side. Residues leucine 124–isoleucine 144 form a helical membrane-spanning segment. Topologically, residues leucine 145 to lysine 150 are cytoplasmic. A helical transmembrane segment spans residues phenylalanine 151–leucine 171. At serine 172–tyrosine 175 the chain is on the periplasmic side. A helical transmembrane segment spans residues glycine 176 to isoleucine 196. Topologically, residues lysine 197–histidine 213 are cytoplasmic. A helical transmembrane segment spans residues phenylalanine 214 to valine 238. The Periplasmic portion of the chain corresponds to valine 239 to tyrosine 249. A helical transmembrane segment spans residues leucine 250–valine 271. The Cytoplasmic portion of the chain corresponds to valine 272–leucine 287. The helical transmembrane segment at asparagine 288–leucine 308 threads the bilayer. At serine 309 to lysine 332 the chain is on the periplasmic side. A helical transmembrane segment spans residues isoleucine 333–serine 353. At tyrosine 354–threonine 362 the chain is on the cytoplasmic side. A helical membrane pass occupies residues proline 363–leucine 383. The Periplasmic portion of the chain corresponds to lysine 384 to glycine 386. A helical transmembrane segment spans residues proline 387–phenylalanine 407. At serine 408–aspartate 416 the chain is on the cytoplasmic side. A helical membrane pass occupies residues phenylalanine 417 to threonine 437. The Periplasmic segment spans residues aspartate 438 to glutamate 440. Residues phenylalanine 441–phenylalanine 461 form a helical membrane-spanning segment. Residues tyrosine 462–lysine 475 lie on the Cytoplasmic side of the membrane.

Belongs to the MurJ/MviN family.

The protein localises to the cell inner membrane. It functions in the pathway cell wall biogenesis; peptidoglycan biosynthesis. In terms of biological role, involved in peptidoglycan biosynthesis. Transports lipid-linked peptidoglycan precursors from the inner to the outer leaflet of the cytoplasmic membrane. The sequence is that of Lipid II flippase MurJ from Thermosipho africanus (strain TCF52B).